The sequence spans 1401 residues: MAP kinase kinase kinase wis4 (1401 aa).

Disordered stretches follow at residues 67 to 99 and 176 to 205; these read HIPLTPSHSGQSEKLMSTRTSHSPYISPTMSYT and QDSISDKSLPSTNQSLHHSEEDTESDNDFS. Composition is skewed to polar residues over residues 72-99 and 176-191; these read PSHSGQSEKLMSTRTSHSPYISPTMSYT and QDSISDKSLPSTNQSL. A Protein kinase domain is found at 1037–1306; that stretch reads WQQGHFVRSG…AVDLLTHPWI (270 aa). ATP contacts are provided by residues 1043-1051 and K1066; that span reads VRSGMFGDV. Catalysis depends on D1161, which acts as the Proton acceptor.

Belongs to the protein kinase superfamily. STE Ser/Thr protein kinase family. MAP kinase kinase kinase subfamily.

It catalyses the reaction L-seryl-[protein] + ATP = O-phospho-L-seryl-[protein] + ADP + H(+). It carries out the reaction L-threonyl-[protein] + ATP = O-phospho-L-threonyl-[protein] + ADP + H(+). Involved in a signal transduction pathway that is activated in under conditions of heat shock, oxidative stress or limited nutrition. Unlike win1, it is not activated by changes in the osmolarity of the extracellular environment. Activates the wis1 MAP kinase kinase by phosphorylation. The chain is MAP kinase kinase kinase wis4 (wis4) from Schizosaccharomyces pombe (strain 972 / ATCC 24843) (Fission yeast).